Reading from the N-terminus, the 214-residue chain is MSGTPDDGDIGLIIAVKRLAAAKTRLAPVFSAQTRENVVLAMLVDTLTAAAGVGSLRSITVITPDEAAAAAAAGLGADVLADPTPEDDPDPLNTAITAAERVVAEGASNIVVLQGDLPALQTQELAEAISAARHHRRSFVADRLGTGTAVLCAFGTALHPRFGPDSSARHRRSGAVELTGAWPGLRCDVDTPADLTAARQLGVGPATARAVAHR.

The phosphoenolpyruvate site is built by Thr148, Gly163, and Ser166.

The protein belongs to the CofC family.

It carries out the reaction phosphoenolpyruvate + GTP + H(+) = enolpyruvoyl-2-diphospho-5'-guanosine + diphosphate. The protein operates within cofactor biosynthesis; coenzyme F420 biosynthesis. Guanylyltransferase that catalyzes the activation of phosphoenolpyruvate (PEP) as enolpyruvoyl-2-diphospho-5'-guanosine, via the condensation of PEP with GTP. It is involved in the biosynthesis of coenzyme F420, a hydride carrier cofactor. In Mycobacterium tuberculosis (strain KZN 1435 / MDR), this protein is Phosphoenolpyruvate guanylyltransferase.